The sequence spans 261 residues: Peroxiredoxin PRX1, mitochondrial (261 aa).

Residues 1-13 (MFSRICSAQLKRT) constitute a mitochondrion transit peptide. The Thioredoxin domain occupies 49-212 (LRINSDAPNF…VLRVIDALQL (164 aa)). At serine 53 the chain carries Phosphoserine. Cysteine 91 functions as the Cysteine sulfenic acid (-SOH) intermediate in the catalytic mechanism.

The protein belongs to the peroxiredoxin family. Prx6 subfamily. Homodimer; disulfide-linked.

The protein localises to the mitochondrion. The catalysed reaction is a hydroperoxide + 2 glutathione = an alcohol + glutathione disulfide + H2O. The enzyme catalyses [glutaredoxin]-dithiol + a hydroperoxide = [glutaredoxin]-disulfide + an alcohol + H2O. Functionally, thiol-specific peroxidase that catalyzes the reduction of hydrogen peroxide and organic hydroperoxides to water and alcohols, respectively. Plays a role in cell protection against oxidative stress by detoxifying peroxides and as sensor of hydrogen peroxide-mediated signaling events. Involved in mitochondrial protection of cadmium-induced oxidative stress. In Saccharomyces cerevisiae (strain ATCC 204508 / S288c) (Baker's yeast), this protein is Peroxiredoxin PRX1, mitochondrial.